The primary structure comprises 45 residues: Sperm-specific protein Phi-3 (45 aa).

The segment at 1 to 45 is disordered; the sequence is AKAKRSPRKKKAAVKKSSKSKAKKPKSPKKKKAAKKPAKKAAKKK.

The protein resides in the nucleus. The protein localises to the chromosome. Functionally, involved in nuclear basic protein transition: histones are replaced by spermatid specific proteins which are themselves replaced by protamines in late spermatids. This is Sperm-specific protein Phi-3 from Mytilus californianus (California mussel).